The sequence spans 279 residues: Thymidylate synthase (279 aa).

Residue 132–133 (RR) coordinates dUMP. C153 functions as the Nucleophile in the catalytic mechanism. Residues 178–181 (RSND), N189, and 219–221 (HIY) each bind dUMP. D181 is a (6R)-5,10-methylene-5,6,7,8-tetrahydrofolate binding site. Position 278 (A278) interacts with (6R)-5,10-methylene-5,6,7,8-tetrahydrofolate.

It belongs to the thymidylate synthase family. Bacterial-type ThyA subfamily. Homodimer.

The protein resides in the cytoplasm. The catalysed reaction is dUMP + (6R)-5,10-methylene-5,6,7,8-tetrahydrofolate = 7,8-dihydrofolate + dTMP. It participates in pyrimidine metabolism; dTTP biosynthesis. Functionally, catalyzes the reductive methylation of 2'-deoxyuridine-5'-monophosphate (dUMP) to 2'-deoxythymidine-5'-monophosphate (dTMP) while utilizing 5,10-methylenetetrahydrofolate (mTHF) as the methyl donor and reductant in the reaction, yielding dihydrofolate (DHF) as a by-product. This enzymatic reaction provides an intracellular de novo source of dTMP, an essential precursor for DNA biosynthesis. This chain is Thymidylate synthase, found in Lactococcus lactis subsp. cremoris (strain SK11).